The chain runs to 144 residues: Large ribosomal subunit protein uL16 (144 aa).

The protein belongs to the universal ribosomal protein uL16 family. In terms of assembly, part of the 50S ribosomal subunit.

Functionally, binds 23S rRNA and is also seen to make contacts with the A and possibly P site tRNAs. The polypeptide is Large ribosomal subunit protein uL16 (Bacillus licheniformis (strain ATCC 14580 / DSM 13 / JCM 2505 / CCUG 7422 / NBRC 12200 / NCIMB 9375 / NCTC 10341 / NRRL NRS-1264 / Gibson 46)).